A 421-amino-acid chain; its full sequence is Outer capsid protein P8 (421 aa).

It belongs to the phytoreovirus outer capsid protein P8 family. In terms of assembly, homotrimer. Homomultimer. Interacts with host peroxisomal glycolate oxidase (GOX). This interaction mediates its relocation to virus factories peripheral to host peroxisomes.

Its subcellular location is the virion. The protein resides in the host cytoplasm. In terms of biological role, capsid protein which self-assembles to form the outer icosahedral capsid with a T=13 symmetry, about 70 nm in diameter and consisting of 780 molecules capsid proteins. The polypeptide is Outer capsid protein P8 (Alopecurus aequalis (Barnyard grass)).